Consider the following 284-residue polypeptide: Elongation factor Ts (284 aa).

Positions 80-83 (TDFV) are involved in Mg(2+) ion dislocation from EF-Tu.

It belongs to the EF-Ts family.

It localises to the cytoplasm. Functionally, associates with the EF-Tu.GDP complex and induces the exchange of GDP to GTP. It remains bound to the aminoacyl-tRNA.EF-Tu.GTP complex up to the GTP hydrolysis stage on the ribosome. The protein is Elongation factor Ts of Neisseria meningitidis serogroup C (strain 053442).